We begin with the raw amino-acid sequence, 494 residues long: Serine/arginine-rich splicing factor 4 (494 aa).

The 71-residue stretch at 2-72 folds into the RRM 1 domain; it reads PRVYIGRLSY…ERVIVEHARG (71 aa). 2 disordered regions span residues 72-95 and 169-494; these read GPRR…GRDK and KIRL…HSRS. Phosphoserine is present on residues serine 78 and serine 84. The RRM 2 domain maps to 104–177; the sequence is YRLIVENLSS…RKIRLVEDKP (74 aa). Composition is skewed to basic residues over residues 179 to 206 and 214 to 246; these read SRRR…KSRS and SHSK…KKEK. Residues 247 to 256 show a composition bias toward basic and acidic residues; the sequence is SRSPSKEKSR. Basic residues predominate over residues 257-267; that stretch reads SRSHSAGKSRS. Positions 268–278 are enriched in basic and acidic residues; that stretch reads KSKDQAEEKIQ. A compositionally biased stretch (basic residues) spans 286 to 302; sequence PKSRSPSRHKSKSKSRS. Phosphoserine is present on residues serine 288, serine 290, and serine 292. The span at 303–327 shows a compositional bias: basic and acidic residues; that stretch reads RSQERRVEEEKRGSVSRGRSQEKSL. 2 stretches are compositionally biased toward basic residues: residues 328-359 and 367-382; these read RQSR…GRKR and RSRS…KRGS. Residues 411 to 431 show a composition bias toward basic and acidic residues; it reads VSKEREHAKSESSQREGRGES. Residues serine 431, serine 446, serine 456, serine 458, and serine 460 each carry the phosphoserine modification. Over residues 449–460 the composition is skewed to low complexity; sequence KSKPNLPSESRS. A compositionally biased stretch (basic residues) spans 461-494; the sequence is RSKSASKTRSRSKSRSRSASRSPSRSRSRSHSRS.

Belongs to the splicing factor SR family. In terms of assembly, found in a pre-mRNA splicing complex with SRSF4/SFRS4, SRSF5/SFRS5, SNRNP70, SNRPA1, SRRM1 and SRRM2. Interacts with PNN. Post-translationally, extensively phosphorylated on serine residues in the RS domain.

Its subcellular location is the nucleus speckle. Functionally, plays a role in alternative splice site selection during pre-mRNA splicing. Represses the splicing of MAPT/Tau exon 10. The protein is Serine/arginine-rich splicing factor 4 (SRSF4) of Homo sapiens (Human).